Consider the following 573-residue polypeptide: Phosphoenolpyruvate-protein phosphotransferase (573 aa).

Catalysis depends on His-190, which acts as the Tele-phosphohistidine intermediate. Phosphoenolpyruvate-binding residues include Arg-297 and Arg-333. Residues Glu-432 and Asp-456 each coordinate Mg(2+). Residues 455–456 and Arg-466 contribute to the phosphoenolpyruvate site; that span reads ND. The Proton donor role is filled by Cys-503.

Belongs to the PEP-utilizing enzyme family. Homodimer. Mg(2+) serves as cofactor.

The protein resides in the cytoplasm. The catalysed reaction is L-histidyl-[protein] + phosphoenolpyruvate = N(pros)-phospho-L-histidyl-[protein] + pyruvate. Functionally, general (non sugar-specific) component of the phosphoenolpyruvate-dependent sugar phosphotransferase system (sugar PTS). This major carbohydrate active-transport system catalyzes the phosphorylation of incoming sugar substrates concomitantly with their translocation across the cell membrane. Enzyme I transfers the phosphoryl group from phosphoenolpyruvate (PEP) to the phosphoryl carrier protein (HPr). The sequence is that of Phosphoenolpyruvate-protein phosphotransferase (ptsI) from Priestia megaterium (Bacillus megaterium).